Consider the following 75-residue polypeptide: Protein SlyX homolog (75 aa).

This sequence belongs to the SlyX family.

The protein is Protein SlyX homolog of Vibrio campbellii (strain ATCC BAA-1116).